Consider the following 125-residue polypeptide: Phosphoribosyl-AMP cyclohydrolase (125 aa).

Mg(2+) is bound at residue Asp-74. Cys-75 contacts Zn(2+). Asp-76 and Asp-78 together coordinate Mg(2+). Zn(2+) is bound by residues Cys-92 and Cys-99.

The protein belongs to the PRA-CH family. Homodimer. Mg(2+) is required as a cofactor. Zn(2+) serves as cofactor.

It is found in the cytoplasm. The enzyme catalyses 1-(5-phospho-beta-D-ribosyl)-5'-AMP + H2O = 1-(5-phospho-beta-D-ribosyl)-5-[(5-phospho-beta-D-ribosylamino)methylideneamino]imidazole-4-carboxamide. It participates in amino-acid biosynthesis; L-histidine biosynthesis; L-histidine from 5-phospho-alpha-D-ribose 1-diphosphate: step 3/9. In terms of biological role, catalyzes the hydrolysis of the adenine ring of phosphoribosyl-AMP. This chain is Phosphoribosyl-AMP cyclohydrolase, found in Geobacter sulfurreducens (strain ATCC 51573 / DSM 12127 / PCA).